The following is a 263-amino-acid chain: Trans-aconitate 2-methyltransferase (263 aa).

It belongs to the methyltransferase superfamily. Tam family.

Its subcellular location is the cytoplasm. It carries out the reaction trans-aconitate + S-adenosyl-L-methionine = (E)-3-(methoxycarbonyl)pent-2-enedioate + S-adenosyl-L-homocysteine. Its function is as follows. Catalyzes the S-adenosylmethionine monomethyl esterification of trans-aconitate. This is Trans-aconitate 2-methyltransferase from Mycobacterium ulcerans (strain Agy99).